Here is an 82-residue protein sequence, read N- to C-terminus: Small ribosomal subunit protein bS16 (82 aa).

The protein belongs to the bacterial ribosomal protein bS16 family.

This chain is Small ribosomal subunit protein bS16, found in Photorhabdus laumondii subsp. laumondii (strain DSM 15139 / CIP 105565 / TT01) (Photorhabdus luminescens subsp. laumondii).